We begin with the raw amino-acid sequence, 374 residues long: C-C chemokine receptor type 2 (374 aa).

Topologically, residues 1–42 are extracellular; sequence MLSTSRSRFIRNTNESGEEVTTFFDYDYGAPCHKFDVKQIGA. An N-linked (GlcNAc...) asparagine glycan is attached at asparagine 14. Sulfotyrosine is present on tyrosine 26. Residues 43–70 traverse the membrane as a helical segment; sequence QLLPPLYSLVFIFGFVGNMLVVLILINC. Residues 71-80 are Cytoplasmic-facing; it reads KKLKCLTDIY. The chain crosses the membrane as a helical span at residues 81 to 100; sequence LLNLAISDLLFLITLPLWAH. At 101–114 the chain is on the extracellular side; it reads SAANEWVFGNAMCK. Cysteines 113 and 190 form a disulfide. A helical transmembrane segment spans residues 115–136; sequence LFTGLYHIGYFGGIFFIILLTI. Residues 137–153 are Cytoplasmic-facing; that stretch reads DRYLAIVHAVFALKART. A Phosphotyrosine; by JAK2 modification is found at tyrosine 139. A helical transmembrane segment spans residues 154 to 178; it reads VTFGVVTSVITWLVAVFASVPGIIF. Residues 179–206 are Extracellular-facing; sequence TKCQKEDSVYVCGPYFPRGWNNFHTIMR. A helical transmembrane segment spans residues 207-226; that stretch reads NILGLVLPLLIMVICYSGIL. Residues 227-243 are Cytoplasmic-facing; that stretch reads KTLLRCRNEKKRHRAVR. A helical transmembrane segment spans residues 244–268; the sequence is VIFTIMIVYFLFWTPYNIVILLNTF. Residues 269-285 lie on the Extracellular side of the membrane; the sequence is QEFFGLSNCESTSQLDQ. Residues 286-309 form a helical membrane-spanning segment; sequence ATQVTETLGMTHCCINPIIYAFVG. Residues 310–374 lie on the Cytoplasmic side of the membrane; the sequence is EKFRSLFHIA…EASLQDKEGA (65 aa). The segment at 348 to 374 is disordered; that stretch reads QGLLDGRGKGKSIGRAPEASLQDKEGA.

It belongs to the G-protein coupled receptor 1 family. In terms of assembly, interacts with ARRB1. Interacts (via extracellular N-terminal region) with beta-defensin DEFB106A/DEFB106B; this interaction may preferentially require specific tyrosine sulfation on CCR2. Interacts with NUP85; the interaction is required for CCR2 clusters formation on the cell membrane and CCR2 signaling. (Microbial infection) Binds to HIV-1 Tat. N-glycosylated. Post-translationally, sulfation increases the affinity for both monomeric and dimeric CCL2 with stronger binding to the monomeric form. Binding of sulfated CCR2 to CCL2 promotes conversion of CCL2 from dimer to monomer. Expressed by monocytes and IL2-activated NK cells. Abundantly expressed on CD14+/CD16- monocytes and weakly on CD14+/CD16+ monocytes, type 2 dendritic cells (DCs) and plasmacytoid DCs (at protein level).

It localises to the cell membrane. Functionally, key functional receptor for CCL2 but can also bind CCL7, and CCL12. Also transduces signaling mediated by CCL13. Its binding with CCL2 on monocytes and macrophages mediates chemotaxis and migration induction through the activation of the PI3K cascade, the small G protein Rac and lamellipodium protrusion. Also acts as a receptor for the beta-defensin DEFB106A/DEFB106B. Regulates the expression of T-cell inflammatory cytokines and T-cell differentiation, promoting the differentiation of T-cells into T-helper 17 cells (Th17) during inflammation. Facilitates the export of mature thymocytes by enhancing directional movement of thymocytes to sphingosine-1-phosphate stimulation and up-regulation of S1P1R expression; signals through the JAK-STAT pathway to regulate FOXO1 activity leading to an increased expression of S1P1R. Plays an important role in mediating peripheral nerve injury-induced neuropathic pain. Increases NMDA-mediated synaptic transmission in both dopamine D1 and D2 receptor-containing neurons, which may be caused by MAPK/ERK-dependent phosphorylation of GRIN2B/NMDAR2B. Mediates the recruitment of macrophages and monocytes to the injury site following brain injury. Its function is as follows. (Microbial infection) Alternative coreceptor with CD4 for HIV-1 infection. This chain is C-C chemokine receptor type 2 (CCR2), found in Homo sapiens (Human).